Consider the following 559-residue polypeptide: Oxygen-dependent choline dehydrogenase (559 aa).

FAD is bound at residue 4-33 (DYIIIGAGSAGNVLATRLTEDSDVTVLLLE). His473 (proton acceptor) is an active-site residue.

It belongs to the GMC oxidoreductase family. Requires FAD as cofactor.

It carries out the reaction choline + A = betaine aldehyde + AH2. The catalysed reaction is betaine aldehyde + NAD(+) + H2O = glycine betaine + NADH + 2 H(+). The protein operates within amine and polyamine biosynthesis; betaine biosynthesis via choline pathway; betaine aldehyde from choline (cytochrome c reductase route): step 1/1. Involved in the biosynthesis of the osmoprotectant glycine betaine. Catalyzes the oxidation of choline to betaine aldehyde and betaine aldehyde to glycine betaine at the same rate. This is Oxygen-dependent choline dehydrogenase from Cronobacter sakazakii (strain ATCC BAA-894) (Enterobacter sakazakii).